We begin with the raw amino-acid sequence, 84 residues long: Small ribosomal subunit protein eS27-like (84 aa).

Basic and acidic residues predominate over residues Met1–Lys16. The tract at residues Met1 to Arg23 is disordered. The C4-type zinc-finger motif lies at Pro38 to Ser60.

The protein belongs to the eukaryotic ribosomal protein eS27 family. It depends on Zn(2+) as a cofactor.

In Mus musculus (Mouse), this protein is Small ribosomal subunit protein eS27-like.